Reading from the N-terminus, the 566-residue chain is Type IV pilus assembly ATPase PilB (566 aa).

An ATP-binding site is contributed by 326–333 (GPTGSGKT). Cysteine 459, cysteine 462, cysteine 494, and cysteine 497 together coordinate Zn(2+).

The protein belongs to the GSP E family. As to quaternary structure, homohexamer. Interacts with PilC. Interacts with FimX; this interaction positively regulates T4P assembly and twitching motility by promoting the activity of the PilB ATPase.

It localises to the cytoplasm. In terms of biological role, ATPase component of the type IV pilus (T4P) that plays a role in surface and host cell adhesion, colonization, biofilm maturation, virulence, and twitching, a form of surface-associated motility facilitated by cycles of extension, adhesion, and retraction of T4P fibers. Acts as a molecular motor to provide the energy that is required for biogenesis of the pilus and the extrusion of substrates generated in the cytoplasm. PilB ATPase activity is also essential for T4P extension while antagonist PilT ATPase activity is required for T4P retraction. This chain is Type IV pilus assembly ATPase PilB (pilB), found in Pseudomonas aeruginosa (strain ATCC 15692 / DSM 22644 / CIP 104116 / JCM 14847 / LMG 12228 / 1C / PRS 101 / PAO1).